The following is a 1340-amino-acid chain: Early transcription factor large subunit homolog (1340 aa).

This sequence belongs to the asfivirus G1340L family.

The protein localises to the virion. Putative initation factor. The protein is Early transcription factor large subunit homolog of African swine fever virus (isolate Tick/South Africa/Pretoriuskop Pr4/1996) (ASFV).